Reading from the N-terminus, the 354-residue chain is Mitogen-activated protein kinase kinase 1 (354 aa).

Positions 68–328 (LEVIKVIGKG…AKELLEHKFV (261 aa)) constitute a Protein kinase domain. ATP-binding positions include 74–82 (IGKGSSGNV) and Lys97. Catalysis depends on Asp190, which acts as the Proton acceptor. Thr218 bears the Phosphothreonine mark. Ser224 is modified (phosphoserine). Residue Thr228 is modified to Phosphothreonine.

The protein belongs to the protein kinase superfamily. STE Ser/Thr protein kinase family. MAP kinase kinase subfamily. Interacts with MEKK1 and MPK4. May form a ternary complex composed of MEKK1 and MKK1/MKK2 and MPK4. Interacts with P.syringae type III effector HopF2. Interacts with MPK11. In terms of processing, phosphorylation at Thr-218 and Ser-224 by MAP kinase kinase kinases positively regulates kinase activity. Expressed in roots, stem, flowers and siliques.

It carries out the reaction L-seryl-[protein] + ATP = O-phospho-L-seryl-[protein] + ADP + H(+). It catalyses the reaction L-threonyl-[protein] + ATP = O-phospho-L-threonyl-[protein] + ADP + H(+). The enzyme catalyses L-tyrosyl-[protein] + ATP = O-phospho-L-tyrosyl-[protein] + ADP + H(+). Activated through serine and threonine phosphorylation in response to wounding, cold, drought, salt stresses, abscisic acid (ABA), hydrogen peroxide, bacterial flagellin and laminarin beta-glucan. Functionally, MEKK1, MKK1/MKK2 and MPK4/MPK6 function in a signaling pathway that modulates the expression of genes responding to biotic and abiotic stresses and also plays an important role in pathogen defense by negatively regulating innate immunity. Activates by phosphorylation the downstream MPK4. Acts redundantly with MKK2. MKK1-MPK6 module mediates abscisic acid (ABA)-dependent CAT1 expression with H(2)O(2) production and response to drought and salt stress. MKK1-MPK6 module is also involved in sugar signaling during the process of seed germination. This chain is Mitogen-activated protein kinase kinase 1 (MKK1), found in Arabidopsis thaliana (Mouse-ear cress).